A 273-amino-acid chain; its full sequence is Formamidopyrimidine-DNA glycosylase (273 aa).

The active-site Schiff-base intermediate with DNA is the Pro2. Glu3 acts as the Proton donor in catalysis. Lys58 (proton donor; for beta-elimination activity) is an active-site residue. 3 residues coordinate DNA: His92, Arg111, and Arg153. The FPG-type zinc finger occupies 238-272 (RVYGREGQKCFNCSSTILKTKNSGRSTFYCKTCQY). Arg262 (proton donor; for delta-elimination activity) is an active-site residue.

The protein belongs to the FPG family. Monomer. Zn(2+) serves as cofactor.

It carries out the reaction Hydrolysis of DNA containing ring-opened 7-methylguanine residues, releasing 2,6-diamino-4-hydroxy-5-(N-methyl)formamidopyrimidine.. It catalyses the reaction 2'-deoxyribonucleotide-(2'-deoxyribose 5'-phosphate)-2'-deoxyribonucleotide-DNA = a 3'-end 2'-deoxyribonucleotide-(2,3-dehydro-2,3-deoxyribose 5'-phosphate)-DNA + a 5'-end 5'-phospho-2'-deoxyribonucleoside-DNA + H(+). In terms of biological role, involved in base excision repair of DNA damaged by oxidation or by mutagenic agents. Acts as a DNA glycosylase that recognizes and removes damaged bases. Has a preference for oxidized purines, such as 7,8-dihydro-8-oxoguanine (8-oxoG). Has AP (apurinic/apyrimidinic) lyase activity and introduces nicks in the DNA strand. Cleaves the DNA backbone by beta-delta elimination to generate a single-strand break at the site of the removed base with both 3'- and 5'-phosphates. This Rickettsia canadensis (strain McKiel) protein is Formamidopyrimidine-DNA glycosylase.